Reading from the N-terminus, the 66-residue chain is DNA gyrase inhibitor YacG (66 aa).

Zn(2+)-binding residues include C10, C13, C29, and C33.

The protein belongs to the DNA gyrase inhibitor YacG family. Interacts with GyrB. The cofactor is Zn(2+).

Functionally, inhibits all the catalytic activities of DNA gyrase by preventing its interaction with DNA. Acts by binding directly to the C-terminal domain of GyrB, which probably disrupts DNA binding by the gyrase. The polypeptide is DNA gyrase inhibitor YacG (Edwardsiella ictaluri (strain 93-146)).